Reading from the N-terminus, the 101-residue chain is MNQKIRIKLKSYDHNLVDKSSERIVRAVKATGAVVSGPIPLPTEKEIFTVLRSPHVNKKSRDQYQLCTYKRLVDIYSTSSKTVDALMKLELPSGVDVEIKV.

Belongs to the universal ribosomal protein uS10 family. In terms of assembly, part of the 30S ribosomal subunit.

In terms of biological role, involved in the binding of tRNA to the ribosomes. The sequence is that of Small ribosomal subunit protein uS10 from Cytophaga hutchinsonii (strain ATCC 33406 / DSM 1761 / CIP 103989 / NBRC 15051 / NCIMB 9469 / D465).